Consider the following 128-residue polypeptide: Large ribosomal subunit protein bL19 (128 aa).

It belongs to the bacterial ribosomal protein bL19 family.

This protein is located at the 30S-50S ribosomal subunit interface and may play a role in the structure and function of the aminoacyl-tRNA binding site. This is Large ribosomal subunit protein bL19 from Ralstonia nicotianae (strain ATCC BAA-1114 / GMI1000) (Ralstonia solanacearum).